The sequence spans 104 residues: L-rhamnose mutarotase (104 aa).

Position 18 (Tyr18) interacts with substrate. Catalysis depends on His22, which acts as the Proton donor. Residues Tyr41 and Trp76–Trp77 each bind substrate.

This sequence belongs to the rhamnose mutarotase family. In terms of assembly, homodimer.

Its subcellular location is the cytoplasm. The enzyme catalyses alpha-L-rhamnose = beta-L-rhamnose. The protein operates within carbohydrate metabolism; L-rhamnose metabolism. Functionally, involved in the anomeric conversion of L-rhamnose. This is L-rhamnose mutarotase from Yersinia pseudotuberculosis serotype O:1b (strain IP 31758).